Reading from the N-terminus, the 147-residue chain is Transcription antitermination protein NusB (147 aa).

It belongs to the NusB family.

Its function is as follows. Involved in transcription antitermination. Required for transcription of ribosomal RNA (rRNA) genes. Binds specifically to the boxA antiterminator sequence of the ribosomal RNA (rrn) operons. The polypeptide is Transcription antitermination protein NusB (Legionella pneumophila (strain Paris)).